We begin with the raw amino-acid sequence, 561 residues long: DNA ligase B (561 aa).

The N6-AMP-lysine intermediate role is filled by lysine 125.

The protein belongs to the NAD-dependent DNA ligase family. LigB subfamily.

The catalysed reaction is NAD(+) + (deoxyribonucleotide)n-3'-hydroxyl + 5'-phospho-(deoxyribonucleotide)m = (deoxyribonucleotide)n+m + AMP + beta-nicotinamide D-nucleotide.. Catalyzes the formation of phosphodiester linkages between 5'-phosphoryl and 3'-hydroxyl groups in double-stranded DNA using NAD as a coenzyme and as the energy source for the reaction. The chain is DNA ligase B from Salmonella choleraesuis (strain SC-B67).